The primary structure comprises 206 residues: Small ribosomal subunit protein uS4 (206 aa).

The 63-residue stretch at 96 to 158 folds into the S4 RNA-binding domain; that stretch reads SRLDNVVYRM…AKGQLRIKGA (63 aa).

Belongs to the universal ribosomal protein uS4 family. As to quaternary structure, part of the 30S ribosomal subunit. Contacts protein S5. The interaction surface between S4 and S5 is involved in control of translational fidelity.

In terms of biological role, one of the primary rRNA binding proteins, it binds directly to 16S rRNA where it nucleates assembly of the body of the 30S subunit. Functionally, with S5 and S12 plays an important role in translational accuracy. The chain is Small ribosomal subunit protein uS4 from Coxiella burnetii (strain CbuG_Q212) (Coxiella burnetii (strain Q212)).